An 849-amino-acid polypeptide reads, in one-letter code: DNA mismatch repair protein MutS (849 aa).

665–672 is an ATP binding site; the sequence is GPNMAGKS.

Belongs to the DNA mismatch repair MutS family.

Functionally, this protein is involved in the repair of mismatches in DNA. It is possible that it carries out the mismatch recognition step. This protein has a weak ATPase activity. This chain is DNA mismatch repair protein MutS, found in Wolbachia pipientis wMel.